The following is a 277-amino-acid chain: MNRLFVVNKPIFRTSNGYMGYVKRKYNTKKVGFSGTLDPFATGCLIVATGQYTKLFQYLNKTPKSYKATLWLGANSPSLDIEKVDSIREVAPFSQKTIEEVLQSFKGELTYYPPRFSAKKVNGKRAYELAREGKEIDLKQITSTIYEITLINYNHPFIHFEATVSEGTYIRSLGALIADRLRVDATLSSLHRIHEGQFHYENEKALDPFTHLAIPSNIYTGDEAYLELGKKLSVDYFEAKENGIYLIETSNFFSIIEIVGEAVKYRFNRIPKFEDTP.

D38 (nucleophile) is an active-site residue.

Belongs to the pseudouridine synthase TruB family. Type 1 subfamily.

The enzyme catalyses uridine(55) in tRNA = pseudouridine(55) in tRNA. Functionally, responsible for synthesis of pseudouridine from uracil-55 in the psi GC loop of transfer RNAs. The sequence is that of tRNA pseudouridine synthase B from Sulfurovum sp. (strain NBC37-1).